The primary structure comprises 597 residues: Phosphoinositide phospholipase C 4 (597 aa).

Positions 26–60 (GPVEDVRDLFEKYTEGDAHMSPEQLQKLMTEEGGE) constitute an EF-hand domain. A PI-PLC X-box domain is found at 114-257 (QNMDAPLSHY…LKEKILISTK (144 aa)). Catalysis depends on residues His129 and His174. A compositionally biased stretch (basic and acidic residues) spans 259–290 (PKEYLEANDTKEKDNGEKGKDSDEDVWGKEPE). The disordered stretch occupies residues 259 to 324 (PKEYLEANDT…ERGSCESDTS (66 aa)). The segment covering 293 to 309 (ISTQSDLDKVTSSVNDL) has biased composition (polar residues). One can recognise a PI-PLC Y-box domain in the interval 333-449 (KRLIAIHAGK…GYVKKPDFLM (117 aa)). Residues 449–579 (MDASPNGQDF…QGIRAVPLFN (131 aa)) form the C2 domain.

Requires Ca(2+) as cofactor. Low expression in leaves, roots, flowers and siliques. Expressed in pollen and in cells of the stigma surface.

It localises to the cytoplasm. Its subcellular location is the cytosol. It is found in the cell membrane. It carries out the reaction a 1,2-diacyl-sn-glycero-3-phospho-(1D-myo-inositol-4,5-bisphosphate) + H2O = 1D-myo-inositol 1,4,5-trisphosphate + a 1,2-diacyl-sn-glycerol + H(+). The production of the second messenger molecules diacylglycerol (DAG) and inositol 1,4,5-trisphosphate (IP3) is mediated by activated phosphatidylinositol-specific phospholipase C enzymes. The polypeptide is Phosphoinositide phospholipase C 4 (PLC4) (Arabidopsis thaliana (Mouse-ear cress)).